Here is a 581-residue protein sequence, read N- to C-terminus: NADH-quinone oxidoreductase subunit C/D (581 aa).

Residues 1–172 (MSAVELVNEL…PPFVMTAARF (172 aa)) are NADH dehydrogenase I subunit C. Residues 196–581 (ELMILNYGPH…IDYVMSDVDR (386 aa)) are NADH dehydrogenase I subunit D.

This sequence in the N-terminal section; belongs to the complex I 30 kDa subunit family. In the C-terminal section; belongs to the complex I 49 kDa subunit family. NDH-1 is composed of 13 different subunits. Subunits NuoB, CD, E, F, and G constitute the peripheral sector of the complex.

Its subcellular location is the cell inner membrane. The catalysed reaction is a quinone + NADH + 5 H(+)(in) = a quinol + NAD(+) + 4 H(+)(out). Functionally, NDH-1 shuttles electrons from NADH, via FMN and iron-sulfur (Fe-S) centers, to quinones in the respiratory chain. The immediate electron acceptor for the enzyme in this species is believed to be ubiquinone. Couples the redox reaction to proton translocation (for every two electrons transferred, four hydrogen ions are translocated across the cytoplasmic membrane), and thus conserves the redox energy in a proton gradient. In Rhodopseudomonas palustris (strain BisB18), this protein is NADH-quinone oxidoreductase subunit C/D.